Consider the following 149-residue polypeptide: Protein RhiC (149 aa).

The signal sequence occupies residues M1 to G23.

It is found in the periplasm. Its function is as follows. May be involved in plant-microbe interaction. The chain is Protein RhiC (rhiC) from Rhizobium leguminosarum bv. viciae.